The primary structure comprises 786 residues: DNA repair and recombination protein RAD54-like (786 aa).

The tract at residues 2–9 (RRSLAPSQ) is required for chromatin remodeling, strand pairing activities and coupling of ATPase activity. Position 22 is a phosphothreonine (Thr-22). Residues 165-340 (EGKRGNFNGC…FSLVNFVNPE (176 aa)) form the Helicase ATP-binding domain. 178–185 (DEMGLGKT) contacts ATP. The DEGH box motif lies at 291–294 (DEGH). The 158-residue stretch at 497 to 654 (LLDFMLAAIR…NNDSAEKHFT (158 aa)) folds into the Helicase C-terminal domain. The tract at residues 740–786 (KQPTCITEDNHSEQPQLNSKRNANSVLENDDDEDFDPNSSDEKFLGF) is disordered. Residues 752 to 766 (EQPQLNSKRNANSVL) are compositionally biased toward polar residues.

The protein belongs to the SNF2/RAD54 helicase family. In terms of assembly, interacts (via N-terminus) with spn-A/Rad51.

It localises to the nucleus. Its function is as follows. Involved in mitotic DNA repair and meiotic recombination. Functions in the recombinational DNA repair pathway. Essential for interhomolog gene conversion (GC), but may have a less important role in intersister GC than spn-A/Rad51. In the presence of DNA, spn-A/Rad51 enhances the ATPase activity of okr/Rad54. In Drosophila virilis (Fruit fly), this protein is DNA repair and recombination protein RAD54-like.